A 348-amino-acid chain; its full sequence is Chaperone protein DnaJ (348 aa).

Residues 3–65 (DLYGILGVDH…EQRQRYDRHV (63 aa)) form the J domain. The CR-type zinc finger occupies 109–191 (GGSQVVKIDS…CYGNGSRSAP (83 aa)). Zn(2+) is bound by residues C122, C125, C139, C142, C165, C168, C179, and C182. 4 CXXCXGXG motif repeats span residues 122 to 129 (CDVCNGTR), 139 to 146 (CFDCNGSG), 165 to 172 (CSKCRGNG), and 179 to 186 (CRRCYGNG).

The protein belongs to the DnaJ family. Homodimer. The cofactor is Zn(2+).

The protein localises to the cytoplasm. Its function is as follows. Participates actively in the response to hyperosmotic and heat shock by preventing the aggregation of stress-denatured proteins and by disaggregating proteins, also in an autonomous, DnaK-independent fashion. Unfolded proteins bind initially to DnaJ; upon interaction with the DnaJ-bound protein, DnaK hydrolyzes its bound ATP, resulting in the formation of a stable complex. GrpE releases ADP from DnaK; ATP binding to DnaK triggers the release of the substrate protein, thus completing the reaction cycle. Several rounds of ATP-dependent interactions between DnaJ, DnaK and GrpE are required for fully efficient folding. Also involved, together with DnaK and GrpE, in the DNA replication of plasmids through activation of initiation proteins. The sequence is that of Chaperone protein DnaJ from Tropheryma whipplei (strain Twist) (Whipple's bacillus).